Consider the following 147-residue polypeptide: Large ribosomal subunit protein bL9 (147 aa).

This sequence belongs to the bacterial ribosomal protein bL9 family.

Its function is as follows. Binds to the 23S rRNA. The chain is Large ribosomal subunit protein bL9 from Gemmatimonas aurantiaca (strain DSM 14586 / JCM 11422 / NBRC 100505 / T-27).